A 1010-amino-acid polypeptide reads, in one-letter code: Contactin-1 (1010 aa).

Positions 1–19 are cleaved as a signal peptide; it reads MRFFISHLVTLCFIFCVAD. Ig-like C2-type domains lie at 33-123, 132-215, 232-317, 322-398, 404-491, and 496-592; these read PVFE…ATLS, PEEH…KSVF, PADI…ARVY, PEWV…AELK, PTFE…GVLE, and TRIT…LVVR. Intrachain disulfides connect Cys-57/Cys-106 and Cys-150/Cys-203. N-linked (GlcNAc...) asparagine glycosylation is found at Asn-200 and Asn-249. Cys-254 and Cys-301 are joined by a disulfide. N-linked (GlcNAc...) asparagine glycosylation is present at Asn-329. 2 disulfides stabilise this stretch: Cys-343–Cys-382 and Cys-427–Cys-475. Residues Asn-448, Asn-464, Asn-485, and Asn-512 are each glycosylated (N-linked (GlcNAc...) asparagine). The cysteines at positions 517 and 574 are disulfide-linked. N-linked (GlcNAc...) asparagine glycosylation occurs at Asn-582. Fibronectin type-III domains follow at residues 597–695, 700–797, 802–897, and 899–990; these read PPGG…TEGA, APSD…SAQD, VPTD…APPS, and RPRI…TAGV. The span at 679 to 689 shows a compositional bias: polar residues; the sequence is GTGEPSMPSQR. The tract at residues 679–708 is disordered; the sequence is GTGEPSMPSQRIRTEGAPPNVAPSDVGGGG. N-linked (GlcNAc...) asparagine glycosylation is present at Asn-924. A lipid anchor (GPI-anchor amidated serine) is attached at Ser-984. Residues 985-1010 constitute a propeptide, removed in mature form; the sequence is GATAGVPTLLLGLVLPALGVLAYSGF.

This sequence belongs to the immunoglobulin superfamily. Contactin family. Interacts with TNR.

It localises to the cell membrane. In terms of biological role, mediates cell surface interactions during nervous system development. Interaction with TNR enhances the neurite outgrowth. The sequence is that of Contactin-1 (CNTN1) from Gallus gallus (Chicken).